Here is a 276-residue protein sequence, read N- to C-terminus: Cholesterol 25-hydroxylase-like protein 1, member 2 (276 aa).

N-linked (GlcNAc...) asparagine glycosylation is present at Asn30. 3 helical membrane-spanning segments follow: residues 39–59 (LFPVVLTVSSYFVLVLPYLSC), 90–110 (GVTLYNHILLVIPAAVAQWMW), and 126–146 (LVGGVTGNLLLFDLQYFIWHF). The Fatty acid hydroxylase domain occupies 134-265 (LLLFDLQYFI…FSHWDKMFGT (132 aa)). A Histidine box-1 motif is present at residues 144–148 (WHFLH). A Histidine box-2 motif is present at residues 159–163 (HAIHH). Asn164 carries an N-linked (GlcNAc...) asparagine glycan. The next 2 membrane-spanning stretches (helical) occupy residues 175–195 (CLGGWELVTVGFWTTLNPVLL) and 199–219 (LLTTWMFMVVHVYVSVEDHCG). The Histidine box-3 motif lies at 240-246 (KHDVHHQ).

Belongs to the sterol desaturase family. The cofactor is Fe cation.

It is found in the endoplasmic reticulum membrane. In terms of biological role, may catalyze the formation of 25-hydroxycholesterol from cholesterol. This chain is Cholesterol 25-hydroxylase-like protein 1, member 2, found in Danio rerio (Zebrafish).